Here is a 515-residue protein sequence, read N- to C-terminus: N-acetylglucosamine-1-phosphodiester alpha-N-acetylglucosaminidase (515 aa).

The first 25 residues, 1–25, serve as a signal peptide directing secretion; the sequence is MATSTGRWLLLRLALFGFLWEASGG. Positions 26–49 are cleaved as a propeptide — removed in mature form; that stretch reads LDSGASRDDDLLLPYPRARARLPR. Residues 50–448 are Lumenal-facing; it reads DCTRVRAGNR…AGELSFFTRT (399 aa). Cystine bridges form between Cys115–Cys148, Cys132–Cys323, Cys307–Cys314, Cys362–Cys373, and Cys380–Cys389. N-linked (GlcNAc...) asparagine glycosylation is found at Asn208, Asn214, and Asn296. The region spanning 358–390 is the EGF-like domain; the sequence is DELDCGPSNCSQHGLCTETGCRCDAGWTGSNCS. 3 N-linked (GlcNAc...) asparagine glycosylation sites follow: Asn366, Asn388, and Asn420. A helical transmembrane segment spans residues 449 to 469; that stretch reads AWLALTLALAFLLLISTAANL. Over 470-515 the chain is Cytoplasmic; that stretch reads SLLLSRAERNRRLHGDYAYHPLQEMNGEPLAAEKEQPGGAHNPFKD. The segment at 486–493 is mediates the interaction with AP4M1; it reads YAYHPLQE. The Tyrosine-based internalization motif motif lies at 488–491; it reads YHPL. The short motif at 511–515 is the NPF internalization motif element; sequence NPFKD.

In terms of assembly, homotetramer arranged as two disulfide-linked homodimers. Interacts with AP4M1. In terms of processing, the precursor is cleaved and activated in the trans-Golgi network by a furin endopeptidase. Isoform 2 may be brain-specific.

The protein localises to the golgi apparatus. Its subcellular location is the golgi stack membrane. The protein resides in the trans-Golgi network. The enzyme catalyses N(4)-[6-(N-acetyl-alpha-D-glucosaminyl-1-phospho)-alpha-D-mannosyl-(1-&gt;2)-alpha-D-mannosyl-(glycan)]-L-asparaginyl-[protein] + H2O = N(4)-[6-phospho-alpha-D-mannosyl-(1-&gt;2)-alpha-D-mannosyl-(glycan)]-L-asparaginyl-[protein] + N-acetyl-D-glucosamine + H(+). It participates in protein modification; protein glycosylation. Functionally, catalyzes the second step in the formation of the mannose 6-phosphate targeting signal on lysosomal enzyme oligosaccharides by removing GlcNAc residues from GlcNAc-alpha-P-mannose moieties, which are formed in the first step. Also hydrolyzes UDP-GlcNAc, a sugar donor for Golgi N-acetylglucosaminyltransferases. The protein is N-acetylglucosamine-1-phosphodiester alpha-N-acetylglucosaminidase (NAGPA) of Homo sapiens (Human).